A 138-amino-acid polypeptide reads, in one-letter code: Actophorin (138 aa).

Blocked amino end (Ser) is present on S2. In terms of domain architecture, ADF-H spans G3–K134.

It belongs to the actin-binding proteins ADF family. Monomer.

The protein resides in the cytoplasm. Its function is as follows. Forms a one to one complex with monomeric actin. Can regulate the pool available for polymerization. Severs actin filaments in a dose-dependent manner. This Acanthamoeba castellanii (Amoeba) protein is Actophorin.